Reading from the N-terminus, the 138-residue chain is ATP synthase epsilon chain (138 aa).

The protein belongs to the ATPase epsilon chain family. In terms of assembly, F-type ATPases have 2 components, CF(1) - the catalytic core - and CF(0) - the membrane proton channel. CF(1) has five subunits: alpha(3), beta(3), gamma(1), delta(1), epsilon(1). CF(0) has three main subunits: a, b and c.

It localises to the cell inner membrane. Functionally, produces ATP from ADP in the presence of a proton gradient across the membrane. The sequence is that of ATP synthase epsilon chain from Ruthia magnifica subsp. Calyptogena magnifica.